Consider the following 363-residue polypeptide: Heat-inducible transcription repressor HrcA (363 aa).

This sequence belongs to the HrcA family.

Functionally, negative regulator of class I heat shock genes (grpE-dnaK-dnaJ and groELS operons). Prevents heat-shock induction of these operons. The polypeptide is Heat-inducible transcription repressor HrcA (Rhizobium radiobacter (Agrobacterium tumefaciens)).